The primary structure comprises 76 residues: Defensin-like protein 5 (76 aa).

The first 29 residues, 1–29 (MKVSPRLNSALLLLFMILATVMGLVTVEA), serve as a signal peptide directing secretion. Cystine bridges form between cysteine 32–cysteine 76, cysteine 43–cysteine 63, cysteine 49–cysteine 70, and cysteine 53–cysteine 72.

This sequence belongs to the DEFL family.

The protein localises to the secreted. Confers broad-spectrum resistance to pathogens. This chain is Defensin-like protein 5 (PDF2.4), found in Arabidopsis thaliana (Mouse-ear cress).